Here is an 839-residue protein sequence, read N- to C-terminus: Septin-interacting protein 1 (839 aa).

Positions 22–164 are disordered; the sequence is INRPRGRQSR…ASERNVGAWE (143 aa). Phosphoserine is present on residues Ser43 and Ser47. Thr53 carries the post-translational modification Phosphothreonine. Positions 88–101 are enriched in basic and acidic residues; that stretch reads LQADDEKGSQKEGA. Acidic residues predominate over residues 102–111; that stretch reads EADQGEESDD. Residues 140 to 149 show a composition bias toward polar residues; it reads SRKQPSTTFQ. The region spanning 167–213 is the G-patch domain; the sequence is TRGIGAKLLLQMGYEPGKGLGKDLQGISHPVQAHVRKGRGAIGAYGP. A coiled-coil region spans residues 363–411; it reads IDNQERECSSQQAALESEHRKLEEIVQLERNHIRTLEESLERVERLIDN.

This sequence belongs to the TFP11/STIP family. Identified in the spliceosome C complex. Interacts with pnut.

The protein localises to the nucleus. Its function is as follows. May be involved in pre-mRNA splicing. This Drosophila melanogaster (Fruit fly) protein is Septin-interacting protein 1 (sip1).